The following is a 306-amino-acid chain: MTDETETPERIPNLLVILGATASGKTRLGVQLAGRLNGEIISADSRQVYCGMDIGTGKDLHEYQGIPYHLIDVAPAGHEFNLFQFQRLFLAAFTDICSRGAFPVLVGGSGMYLDCVLRGYRLTEVPQDPALREELAPLSMDELASRLVRSNPRLHNSTDLTERARLIRAIEIAEYRGEAGDDWPELTPLTIGIRWERAQLRERITKRLKERMEQGMVEEVERLHAMGTSWEQLEFYGLEYRYLARYLKGELSRNDMFQKLNSAIHDFAKKQENWFRKMQTNGIAINWVEGNSDPLAQALELLAKNR.

19–26 (GATASGKT) provides a ligand contact to ATP. Position 21-26 (21-26 (TASGKT)) interacts with substrate. Positions 44–47 (DSRQ) are interaction with substrate tRNA.

It belongs to the IPP transferase family. In terms of assembly, monomer. Mg(2+) is required as a cofactor.

The catalysed reaction is adenosine(37) in tRNA + dimethylallyl diphosphate = N(6)-dimethylallyladenosine(37) in tRNA + diphosphate. In terms of biological role, catalyzes the transfer of a dimethylallyl group onto the adenine at position 37 in tRNAs that read codons beginning with uridine, leading to the formation of N6-(dimethylallyl)adenosine (i(6)A). The chain is tRNA dimethylallyltransferase 2 from Citrifermentans bemidjiense (strain ATCC BAA-1014 / DSM 16622 / JCM 12645 / Bem) (Geobacter bemidjiensis).